Consider the following 185-residue polypeptide: Ribosome-recycling factor (185 aa).

This sequence belongs to the RRF family.

Its subcellular location is the cytoplasm. Its function is as follows. Responsible for the release of ribosomes from messenger RNA at the termination of protein biosynthesis. May increase the efficiency of translation by recycling ribosomes from one round of translation to another. In Histophilus somni (strain 2336) (Haemophilus somnus), this protein is Ribosome-recycling factor.